The primary structure comprises 67 residues: ATP synthase F(0) complex subunit 8 (67 aa).

Residues 8–24 (TWFTTVLASSITLFILM) form a helical membrane-spanning segment. K54 bears the N6-acetyllysine; alternate mark. N6-succinyllysine; alternate is present on K54. Residue K57 is modified to N6-acetyllysine.

This sequence belongs to the ATPase protein 8 family. Component of the ATP synthase complex composed at least of ATP5F1A/subunit alpha, ATP5F1B/subunit beta, ATP5MC1/subunit c (homooctomer), MT-ATP6/subunit a, MT-ATP8/subunit 8, ATP5ME/subunit e, ATP5MF/subunit f, ATP5MG/subunit g, ATP5MK/subunit k, ATP5MJ/subunit j, ATP5F1C/subunit gamma, ATP5F1D/subunit delta, ATP5F1E/subunit epsilon, ATP5PF/subunit F6, ATP5PB/subunit b, ATP5PD/subunit d, ATP5PO/subunit OSCP. ATP synthase complex consists of a soluble F(1) head domain (subunits alpha(3) and beta(3)) - the catalytic core - and a membrane F(0) domain - the membrane proton channel (subunits c, a, 8, e, f, g, k and j). These two domains are linked by a central stalk (subunits gamma, delta, and epsilon) rotating inside the F1 region and a stationary peripheral stalk (subunits F6, b, d, and OSCP). Interacts with PRICKLE3.

The protein localises to the mitochondrion membrane. Its function is as follows. Subunit 8, of the mitochondrial membrane ATP synthase complex (F(1)F(0) ATP synthase or Complex V) that produces ATP from ADP in the presence of a proton gradient across the membrane which is generated by electron transport complexes of the respiratory chain. ATP synthase complex consist of a soluble F(1) head domain - the catalytic core - and a membrane F(1) domain - the membrane proton channel. These two domains are linked by a central stalk rotating inside the F(1) region and a stationary peripheral stalk. During catalysis, ATP synthesis in the catalytic domain of F(1) is coupled via a rotary mechanism of the central stalk subunits to proton translocation. In vivo, can only synthesize ATP although its ATP hydrolase activity can be activated artificially in vitro. Part of the complex F(0) domain. The polypeptide is ATP synthase F(0) complex subunit 8 (Cricetulus griseus (Chinese hamster)).